Consider the following 77-residue polypeptide: Conotoxin Lt7.1 (77 aa).

A signal peptide spans 1–19 (MEKLTILLLVAALLMSTQG). The propeptide occupies 20–49 (LIQSGGENRPKEKIKFLSKRKTVAESWWEG). 3 disulfide bridges follow: Cys51-Cys65, Cys58-Cys69, and Cys64-Cys74.

Belongs to the conotoxin O2 superfamily. In terms of tissue distribution, expressed by the venom duct.

It localises to the secreted. The polypeptide is Conotoxin Lt7.1 (Conus litteratus (Lettered cone)).